The primary structure comprises 249 residues: MDIKDEKALTIEKACTINVFAPFVRNVTAEDEKAVTNKKHINSSATVHVFHGVVNRTFKTKGNTVGLPKSFSKAVIETLSYKPFAPICIHSRSDEVVNGFPLIYFPEDLASHDISGKDWKSFIHDVNMACSFSDVALMGLDQILNLVSFGLSAYVISYYVEKYVDKAKFPIIKGFIEMWNRKFFNPRKTHVYFINSDEVAEQRAVSIKAYQQGKGTKGLFSKFNAQREWKKQHQDISSTQHSRLLLISL.

Its subcellular location is the cytoplasm. It is found in the nucleus. This is an uncharacterized protein from Schizosaccharomyces pombe (strain 972 / ATCC 24843) (Fission yeast).